Here is a 256-residue protein sequence, read N- to C-terminus: Gamma carbonic anhydrase-like 2, mitochondrial (256 aa).

A mitochondrion-targeting transit peptide spans 1-33 (MATSLARISKRSITSAVSSNLIRRYFAAEAVAV). Substrate contacts are provided by residues 103–105 (RGD) and 118–119 (QE). Zn(2+) is bound at residue His-124. 3 residues coordinate substrate: Arg-152, Gln-164, and Tyr-231.

The protein belongs to the gamma-class carbonic anhydrase family. In terms of assembly, component of the mitochondrial oxidoreductase respiratory chain complex I; element of the extra matrix-exposed domain, which is attached to the membrane arm of this complex. Interacts with GAMMACA2.

The protein localises to the mitochondrion membrane. Functionally, involved in complex I assembly in mitochondria and respiration. The protein is Gamma carbonic anhydrase-like 2, mitochondrial (GAMMACAL2) of Arabidopsis thaliana (Mouse-ear cress).